A 246-amino-acid polypeptide reads, in one-letter code: uncharacterized protein (246 aa).

This is an uncharacterized protein from Escherichia coli O157:H7.